A 26-amino-acid polypeptide reads, in one-letter code: VIDDLKKVAKKVRRELLCKKHHKKLN.

As to expression, expressed by the skin glands.

It localises to the secreted. Antimicrobial peptide. Active against the Gram-positive bacteria S.aureus FDA209P (MIC=35.5 ug/ml) and B.subtilis ATCC 6633 (MIC&gt;64 ug/ml), but not active against the Gram-negative bacterium E.coli or the fungus C.albicans. In Sylvirana guentheri (Gunther's frog), this protein is Guentherin.